We begin with the raw amino-acid sequence, 865 residues long: Alanine--tRNA ligase (865 aa).

Residues His554, His558, Cys656, and His660 each coordinate Zn(2+).

The protein belongs to the class-II aminoacyl-tRNA synthetase family. The cofactor is Zn(2+).

It localises to the cytoplasm. It carries out the reaction tRNA(Ala) + L-alanine + ATP = L-alanyl-tRNA(Ala) + AMP + diphosphate. Its function is as follows. Catalyzes the attachment of alanine to tRNA(Ala) in a two-step reaction: alanine is first activated by ATP to form Ala-AMP and then transferred to the acceptor end of tRNA(Ala). Also edits incorrectly charged Ser-tRNA(Ala) and Gly-tRNA(Ala) via its editing domain. The polypeptide is Alanine--tRNA ligase (Francisella philomiragia subsp. philomiragia (strain ATCC 25017 / CCUG 19701 / FSC 153 / O#319-036)).